The primary structure comprises 155 residues: Phytohormone-binding protein CSBP (155 aa).

Trans-zeatin is bound by residues leucine 22, glutamine 67, glutamate 69, and 139–142 (TLMY). Glutamine 67 serves as a coordination point for gibberellin A3. Threonine 139 provides a ligand contact to gibberellin A3.

It belongs to the BetVI family. As to quaternary structure, monomer.

In terms of biological role, binds the cytokinin trans-zeatin in vitro. Binds gibberellin A3 (GA3) in vitro. This is Phytohormone-binding protein CSBP from Vigna radiata var. radiata (Mung bean).